The following is a 283-amino-acid chain: Pantothenate synthetase (283 aa).

26-33 (MGNLHEGH) lines the ATP pocket. H33 serves as the catalytic Proton donor. Residue Q57 participates in (R)-pantoate binding. Q57 lines the beta-alanine pocket. 144 to 147 (GKKD) is an ATP binding site. Position 150 (Q150) interacts with (R)-pantoate. ATP is bound by residues I173 and 181–184 (LSSR).

This sequence belongs to the pantothenate synthetase family. In terms of assembly, homodimer.

The protein localises to the cytoplasm. It catalyses the reaction (R)-pantoate + beta-alanine + ATP = (R)-pantothenate + AMP + diphosphate + H(+). The protein operates within cofactor biosynthesis; (R)-pantothenate biosynthesis; (R)-pantothenate from (R)-pantoate and beta-alanine: step 1/1. Functionally, catalyzes the condensation of pantoate with beta-alanine in an ATP-dependent reaction via a pantoyl-adenylate intermediate. The chain is Pantothenate synthetase from Polynucleobacter necessarius subsp. necessarius (strain STIR1).